The following is a 307-amino-acid chain: Methionyl-tRNA formyltransferase (307 aa).

108-111 (SLLP) serves as a coordination point for (6S)-5,6,7,8-tetrahydrofolate.

It belongs to the Fmt family.

It carries out the reaction L-methionyl-tRNA(fMet) + (6R)-10-formyltetrahydrofolate = N-formyl-L-methionyl-tRNA(fMet) + (6S)-5,6,7,8-tetrahydrofolate + H(+). In terms of biological role, attaches a formyl group to the free amino group of methionyl-tRNA(fMet). The formyl group appears to play a dual role in the initiator identity of N-formylmethionyl-tRNA by promoting its recognition by IF2 and preventing the misappropriation of this tRNA by the elongation apparatus. The protein is Methionyl-tRNA formyltransferase of Renibacterium salmoninarum (strain ATCC 33209 / DSM 20767 / JCM 11484 / NBRC 15589 / NCIMB 2235).